The sequence spans 231 residues: Urease subunit gamma/beta (231 aa).

The tract at residues 1–101 (MLLTPTELER…LVTVHQPIRP (101 aa)) is urease gamma. The urease beta stretch occupies residues 102 to 231 (GQLPLAVMPT…RARAQFFKGA (130 aa)).

This sequence in the N-terminal section; belongs to the urease gamma subunit family. It in the C-terminal section; belongs to the urease beta subunit family. In terms of assembly, heterohexamer of 3 UreC (alpha) and 3 UreAB (gamma/beta) subunits.

It localises to the cytoplasm. It catalyses the reaction urea + 2 H2O + H(+) = hydrogencarbonate + 2 NH4(+). It functions in the pathway nitrogen metabolism; urea degradation; CO(2) and NH(3) from urea (urease route): step 1/1. The chain is Urease subunit gamma/beta from Pseudomonas syringae pv. syringae (strain B728a).